The sequence spans 1336 residues: SH3 domain and tetratricopeptide repeat-containing protein 1 (1336 aa).

Methionine 1 carries the N-acetylmethionine modification. 2 disordered regions span residues 1-76 and 225-266; these read MENL…PPCQ and TGPR…SEEV. The segment covering 18-27 has biased composition (gly residues); the sequence is GPVGPSGGGS. Residues 46 to 61 are compositionally biased toward basic and acidic residues; the sequence is AGPEEAKAPVRGDEAP. Composition is skewed to low complexity over residues 62 to 74 and 247 to 266; these read PARVAGPAAGTPP and EAAPETDSSPPSPSVSSEEV. One can recognise an SH3 domain in the interval 305–368; it reads MAVGLASALA…RSSLISMQGP (64 aa). TPR repeat units lie at residues 560 to 593, 601 to 634, 665 to 698, 786 to 819, 863 to 896, 946 to 979, 1027 to 1063, and 1192 to 1225; these read ARLCFLLGRLCSRRLKLSQARVYFEEALGALEGS, VAVYANLASIYRKQKNREKCAQVVPKAMALLLGT, ARACFLLARHHVHLKQPEEALPFLERLLLLHRDS, GPLYTSLAQLYSHHGCHGPAITFMTQAVEASAIA, GVIANMVAVALKRTGRTRQAAESYYRALRVARDL, THVLLQLGHLCTRQGPAQQGKGYYEWALLVAVEM, GQLLETISQLYLSLGTERAYKSALDYTKRSLGIFIDL, and RVAYHRLAALQHRLGHGELAEHFYLKALSLCNSP. Position 1248 is a phosphotyrosine (tyrosine 1248). The TPR 9 repeat unit spans residues 1277 to 1311; the sequence is LKIYTRLATIYHNFLLDREKSLFFYQKARTFATEL.

The chain is SH3 domain and tetratricopeptide repeat-containing protein 1 (SH3TC1) from Homo sapiens (Human).